We begin with the raw amino-acid sequence, 443 residues long: Phosphatidate cytidylyltransferase 2 (443 aa).

The span at 1–38 (MTELRQRAVREDAPPEDKESESEAKLDGETASDSESRA) shows a compositional bias: basic and acidic residues. Residues 1-51 (MTELRQRAVREDAPPEDKESESEAKLDGETASDSESRAETAPPPTSIDDTP) are disordered. The residue at position 20 (Ser20) is a Phosphoserine. Position 30 is a phosphothreonine (Thr30). Phosphoserine is present on residues Ser32, Ser34, and Ser36. A Phosphothreonine modification is found at Thr50. The next 6 helical transmembrane spans lie at 78-98 (MIAF…MIVM), 129-149 (WYFL…DYFF), 165-185 (HRFI…LSLV), 212-232 (LVIH…SCVI), 261-281 (GFIG…YVMS), and 338-358 (SALS…ASGF).

It belongs to the CDS family. Homodimer.

The protein localises to the endoplasmic reticulum membrane. The catalysed reaction is a 1,2-diacyl-sn-glycero-3-phosphate + CTP + H(+) = a CDP-1,2-diacyl-sn-glycerol + diphosphate. It carries out the reaction 1-octadecanoyl-2-(5Z,8Z,11Z,14Z-eicosatetraenoyl)-sn-glycero-3-phosphate + CTP + H(+) = 1-octadecanoyl-2-(5Z,8Z,11Z,14Z-eicosatetraenoyl)-sn-glycero-3-cytidine-5'-diphosphate + diphosphate. It catalyses the reaction 1-octadecanoyl-2-(9Z,12Z-octadecadienoyl)-sn-glycero-3-phosphate + CTP + H(+) = 1-octadecanoyl-2-(9Z,12Z-octadecadienoyl)-sn-glycero-3-cytidine-5'-diphosphate + diphosphate. The enzyme catalyses 1-hexadecanoyl-2-(5Z,8Z,11Z,14Z-eicosatetraenoyl)-sn-glycero-3-phosphate + CTP + H(+) = 1-hexadecanoyl-2-(5Z,8Z,11Z,14Z-eicosatetraenoyl)-sn-glycero-3-cytidine-5'-diphosphate + diphosphate. The catalysed reaction is 1,2-di-(5Z,8Z,11Z,14Z)-eicosatetraenoyl-sn-glycero-3-phosphate + CTP + H(+) = 1,2-di-(5Z,8Z,11Z,14Z-eicosatetraenoyl)-sn-glycero-3-cytidine-5'-diphosphate + diphosphate. It carries out the reaction 1-octadecanoyl-2-(9Z-octadecenoyl)-sn-glycero-3-phosphate + CTP + H(+) = 1-octadecanoyl-2-(9Z-octadecenoyl)-sn-glycero-3-cytidine-5'-diphosphate + diphosphate. It catalyses the reaction 1-octadecanoyl-2-(4Z,7Z,10Z,13Z,16Z,19Z-docosahexaenoyl)-sn-glycero-3-phosphate + CTP + H(+) = 1-octadecanoyl-2-(4Z,7Z,10Z,13Z,16Z,19Z-docosahexaenoyl)-sn-glycero-3-cytidine-5'-diphosphate + diphosphate. The enzyme catalyses 1,2-di-(9Z,12Z-octadecadienoyl)-sn-glycero-3-phosphate + CTP + H(+) = 1,2-di-(9Z,12Z-octadecadienoyl)-sn-glycero-3-cytidine-5'-diphosphate + diphosphate. The catalysed reaction is 1,2-di-(9Z-octadecenoyl)-sn-glycero-3-phosphate + CTP + H(+) = 1,2-di-(9Z-octadecenoyl)-sn-glycero-3-cytidine-5'-diphosphate + diphosphate. It functions in the pathway phospholipid metabolism; CDP-diacylglycerol biosynthesis; CDP-diacylglycerol from sn-glycerol 3-phosphate: step 3/3. Functionally, catalyzes the conversion of phosphatidic acid (PA) to CDP-diacylglycerol (CDP-DAG), an essential intermediate in the synthesis of phosphatidylglycerol, cardiolipin and phosphatidylinositol. Exhibits specificity for the nature of the acyl chains at the sn-1 and sn-2 positions in the substrate, PA and the preferred acyl chain composition is 1-stearoyl-2-arachidonoyl-sn-phosphatidic acid. Plays an important role in regulating the growth and maturation of lipid droplets which are storage organelles at the center of lipid and energy homeostasis. The protein is Phosphatidate cytidylyltransferase 2 of Rattus norvegicus (Rat).